Consider the following 307-residue polypeptide: Ninja-family protein 5 (307 aa).

Disordered stretches follow at residues 1 to 159 and 173 to 208; these read MASR…EHTV and TAGS…EPQP. A compositionally biased stretch (gly residues) spans 8-30; sequence GGFGRDGGQAPVGGAGAAPGPGG. Polar residues-rich tracts occupy residues 63–83 and 173–183; these read QRSS…GTSC and TAGSPTPSRPQ.

This sequence belongs to the Ninja family.

The protein resides in the nucleus. This is Ninja-family protein 5 from Zea mays (Maize).